We begin with the raw amino-acid sequence, 74 residues long: Kappa-scoloptoxin(03)-Ssm1a (74 aa).

Residues 1–23 form the signal peptide; it reads MNSSIAILLVMALIMFSLDKSYS. Cystine bridges form between Cys-32/Cys-59, Cys-42/Cys-58, and Cys-45/Cys-68.

The protein belongs to the scoloptoxin-03 family. Expressed by the venom gland.

It localises to the secreted. Functionally, this toxin inhibits voltage-gated potassium channel currents in DRG neurons (IC(50)=44.2 nM). In vivo, insects injected with this toxin showed signs of neurotoxicity including twitching, paralysis, and body contraction. In Scolopendra mutilans (Chinese red-headed centipede), this protein is Kappa-scoloptoxin(03)-Ssm1a.